The following is a 311-amino-acid chain: MQAPPPEHCPGVESEDAGKGSACSGCPNQGVCSDPNKKLEDPGKALVVESMKDVKHKLLILSGKGGVGKSTVTSLLARYLARSNPDSNFGVLDIDICGPSQPRLMGALGESVHQSGYGWSPVGIEDNVCLMSIGFLLGSVDDAIIWRGPKKNGMIRQFLSEVDWGNLDLLLLDTPPGTSDEHLSVVSYLKDDTNSESLRAVMVTTPQEVSLLDVRKEINFCKKQNIPIVGVIENMSSFRCGHCGNTSEIFPAKTGGAPAMCAEMGIPLLGSLPLDQQISKACDSGEDLTEFKNVTTEALEGICSKIMASFS.

Residues 1 to 21 are disordered; sequence MQAPPPEHCPGVESEDAGKGS. [4Fe-4S] cluster is bound by residues Cys-9, Cys-23, Cys-26, and Cys-32. 63–70 is a binding site for ATP; it reads GKGGVGKS. Residues Cys-240 and Cys-243 each contribute to the [4Fe-4S] cluster site.

The protein belongs to the Mrp/NBP35 ATP-binding proteins family. NUBP1/NBP35 subfamily. In terms of assembly, heterotetramer of 2 Nubp1 and 2 Nubp2 chains. Requires [4Fe-4S] cluster as cofactor.

It is found in the cytoplasm. Functionally, component of the cytosolic iron-sulfur (Fe/S) protein assembly (CIA) machinery. Required for maturation of extramitochondrial Fe-S proteins. The Nubp1-Nubp2 heterotetramer forms a Fe-S scaffold complex, mediating the de novo assembly of an Fe-S cluster and its transfer to target apoproteins. This is Cytosolic Fe-S cluster assembly factor Nubp1 homolog from Drosophila sechellia (Fruit fly).